The sequence spans 495 residues: MASCHTAGHRTGLSSRSLYSLGGNQHTSYNVAGGSARGTRHSFGYGYGGGRGSGFANSMFGSMALGANCPSVCLSGGIYQVTVNKSLLAPLNVELDPEIQKVRAQEREQIKALNDKFASFIDKVRFLEQQNQVLQTKWELLQQLDLSNCRRNLEPVYEAHISNLRKQLEMLSGERVRLDPDLRKMRDVVEDYKKRYEVEITQRTAAENEFVLLKKDADAAYTVKVELQDKVDSLDKDIKFLKCLYDEEISQLQTHASETSVILSMDNNRDLDLAGIIAEVRAHYEDIALKSKAEAEMLYQTKIQELQLAAGCYGDSLKHIRSEMLELDRLIQRIRCDIANVKKQCSNLEMAIADAEQRGDSALKDAWAKLDELEGALQQAKEELARMLCEYQELMGLKLSLDVEIATYRKLLEGEENRMSGENPSSVSVSVISSSCGSCGYHPSSMISDSEAGNAVGSPSTPRNSQSKTRGSSVDPRDAQDESAAAAGTLARKTT.

A head region spans residues 1–105 (MASCHTAGHR…DPEIQKVRAQ (105 aa)). Residues 106-141 (EREQIKALNDKFASFIDKVRFLEQQNQVLQTKWELL) are coil 1A. The region spanning 106–419 (EREQIKALND…KLLEGEENRM (314 aa)) is the IF rod domain. The interval 142–160 (QQLDLSNCRRNLEPVYEAH) is linker 1. The tract at residues 161–252 (ISNLRKQLEM…CLYDEEISQL (92 aa)) is coil 1B. A linker 12 region spans residues 253–276 (QTHASETSVILSMDNNRDLDLAGI). A coil 2 region spans residues 277–415 (IAEVRAHYED…ATYRKLLEGE (139 aa)). The tail stretch occupies residues 416–495 (ENRMSGENPS…AAGTLARKTT (80 aa)). Positions 449–495 (DSEAGNAVGSPSTPRNSQSKTRGSSVDPRDAQDESAAAAGTLARKTT) are disordered. Residues 457–472 (GSPSTPRNSQSKTRGS) are compositionally biased toward polar residues.

The protein belongs to the intermediate filament family. In terms of assembly, heterotetramer of two type I and two type II keratins. In terms of tissue distribution, expressed in epidermis with a particularly strong staining in the nail matrix, nail bed and hyponychium (at protein level).

Functionally, has a role in hair formation. Specific component of keratin intermediate filaments in the inner root sheath (IRS) of the hair follicle. In Mus musculus (Mouse), this protein is Keratin, type II cytoskeletal 74.